The chain runs to 291 residues: MGTPWRKRKGIAGPGLPDLSCALVLQPRAQVGTMSPAIALAFLPLVVTLLVRYRHYFRLLVRTVLLRSLRDCLSGLRIEERAFSYVLTHALPGDPGHILTTLDHWSSRCEYLSHMGPVKGQILMRLVEEKAPACVLELGTYCGYSTLLIARALPPGGRLLTVERDPRTAAVAEKLIRLAGFDEHMVELIVGSSEDVIPCLRTQYQLSRADLVLLAHRPRCYLRDLQLLEAHALLPAGATVLADHVLFPGAPRFLQYAKSCGRYRCRLHHTGLPDFPAIKDGIAQLTYAGPG.

The chain crosses the membrane as a helical span at residues 31 to 51 (VGTMSPAIALAFLPLVVTLLV). S-adenosyl-L-methionine contacts are provided by residues glutamate 137, 139 to 140 (GT), serine 145, glutamate 163, and serine 193.

This sequence belongs to the class I-like SAM-binding methyltransferase superfamily. Cation-dependent O-methyltransferase family. In terms of assembly, interacts with LHFPL5, PCDH15, TMC1, TMC2 and TMIE. Interacts directly with TMC1. The interaction of TOMT with TMC1 and TMC2 is required for the transportation of TMC1/2 into the stereocilia of hair cells.

It is found in the membrane. It localises to the cytoplasm. Its subcellular location is the endoplasmic reticulum. It carries out the reaction a catechol + S-adenosyl-L-methionine = a guaiacol + S-adenosyl-L-homocysteine + H(+). Its function is as follows. Catalyzes the O-methylation, and thereby the inactivation, of catecholamine neurotransmitters and catechol hormones. Required for auditory function. Component of the cochlear hair cell's mechanotransduction (MET) machinery. Involved in the assembly of the asymmetric tip-link MET complex. Required for transportation of TMC1 and TMC2 proteins into the mechanically sensitive stereocilia of the hair cells. The function in MET is independent of the enzymatic activity. This Homo sapiens (Human) protein is Transmembrane O-methyltransferase.